We begin with the raw amino-acid sequence, 448 residues long: Methylenetetrahydrofolate--tRNA-(uracil-5-)-methyltransferase TrmFO (448 aa).

13 to 18 (GAGLAG) provides a ligand contact to FAD.

Belongs to the MnmG family. TrmFO subfamily. Requires FAD as cofactor.

It localises to the cytoplasm. The enzyme catalyses uridine(54) in tRNA + (6R)-5,10-methylene-5,6,7,8-tetrahydrofolate + NADH + H(+) = 5-methyluridine(54) in tRNA + (6S)-5,6,7,8-tetrahydrofolate + NAD(+). It carries out the reaction uridine(54) in tRNA + (6R)-5,10-methylene-5,6,7,8-tetrahydrofolate + NADPH + H(+) = 5-methyluridine(54) in tRNA + (6S)-5,6,7,8-tetrahydrofolate + NADP(+). Functionally, catalyzes the folate-dependent formation of 5-methyl-uridine at position 54 (M-5-U54) in all tRNAs. This Streptococcus pyogenes serotype M28 (strain MGAS6180) protein is Methylenetetrahydrofolate--tRNA-(uracil-5-)-methyltransferase TrmFO.